A 1192-amino-acid polypeptide reads, in one-letter code: Homeodomain-interacting protein kinase 3 (1192 aa).

Lys-27 participates in a covalent cross-link: Glycyl lysine isopeptide (Lys-Gly) (interchain with G-Cter in SUMO); alternate. Lys-27 participates in a covalent cross-link: Glycyl lysine isopeptide (Lys-Gly) (interchain with G-Cter in SUMO2); alternate. In terms of domain architecture, Protein kinase spans 197 to 525 (YEVLDFLGRG…PIETLNHPFV (329 aa)). Residues 203-211 (LGRGTFGQV) and Lys-226 contribute to the ATP site. Catalysis depends on Asp-322, which acts as the Proton acceptor. Tyr-359 carries the phosphotyrosine modification. Residues 767 to 921 (QNRSNSLQNT…NSMSDDEQES (155 aa)) form an interaction with AR region. An interaction with FAS region spans residues 775 to 868 (NTNIPHSAFI…SPRPSLRECK (94 aa)). A disordered region spans residues 799–829 (CVDTQDNHTSEGEAGTCREASVRQDSSVSDK). Positions 832–988 (QTIIIADSPS…ESGLSVDEHM (157 aa)) are required for localization to nuclear speckles. Positions 843–895 (AVSVITISSDSDDEETSPRPSLRECKGSLDCEACQSTLNIDRMCSLSSPDSTL) are SUMO interaction motifs (SIM); required for nuclear localization and kinase activity. The segment at 847 to 857 (ITISSDSDDEE) is interaction with UBL1. Low complexity predominate over residues 889–906 (SSPDSTLSTSSSGQSSPS). Disordered regions lie at residues 889-943 (SSPD…PFAE) and 956-1023 (LGTC…KPAA). Residue Lys-1185 forms a Glycyl lysine isopeptide (Lys-Gly) (interchain with G-Cter in SUMO) linkage.

It belongs to the protein kinase superfamily. CMGC Ser/Thr protein kinase family. HIPK subfamily. In terms of assembly, interacts with UBL1/SUMO-1. Interacts with and stabilizes ligand-bound androgen receptor (AR). Interacts with Nkx1-2. Interacts with FAS and DAXX. Probably part of a complex consisting of HIPK3, FAS and FADD. Binds to NR5A1/SF1, SPEN/MINT and RUNX2. Post-translationally, autophosphorylated, but autophosphorylation is not required for catalytic activity. May be sumoylated. As to expression, heart, skeletal muscle, spleen, testis and lung.

It is found in the cytoplasm. The protein localises to the nucleus. The catalysed reaction is L-seryl-[protein] + ATP = O-phospho-L-seryl-[protein] + ADP + H(+). It carries out the reaction L-threonyl-[protein] + ATP = O-phospho-L-threonyl-[protein] + ADP + H(+). Its function is as follows. Serine/threonine-protein kinase involved in transcription regulation, apoptosis and steroidogenic gene expression. Phosphorylates JUN and RUNX2. Seems to negatively regulate apoptosis by promoting FADD phosphorylation. Enhances androgen receptor-mediated transcription. May act as a transcriptional corepressor for NK homeodomain transcription factors. The phosphorylation of NR5A1 activates SF1 leading to increased steroidogenic gene expression upon cAMP signaling pathway stimulation. In osteoblasts, supports transcription activation: phosphorylates RUNX2 that synergizes with SPEN/MINT to enhance FGFR2-mediated activation of the osteocalcin FGF-responsive element (OCFRE). This chain is Homeodomain-interacting protein kinase 3 (Hipk3), found in Mus musculus (Mouse).